A 204-amino-acid chain; its full sequence is Urease accessory protein UreG (204 aa).

12–19 (GPVGSGKT) contributes to the GTP binding site.

It belongs to the SIMIBI class G3E GTPase family. UreG subfamily. Homodimer. UreD, UreF and UreG form a complex that acts as a GTP-hydrolysis-dependent molecular chaperone, activating the urease apoprotein by helping to assemble the nickel containing metallocenter of UreC. The UreE protein probably delivers the nickel.

It localises to the cytoplasm. In terms of biological role, facilitates the functional incorporation of the urease nickel metallocenter. This process requires GTP hydrolysis, probably effectuated by UreG. The protein is Urease accessory protein UreG of Ectopseudomonas mendocina (strain ymp) (Pseudomonas mendocina).